A 123-amino-acid chain; its full sequence is Large ribosomal subunit protein uL29 (123 aa).

An N6-acetyllysine modification is found at K19. K25 participates in a covalent cross-link: Glycyl lysine isopeptide (Lys-Gly) (interchain with G-Cter in SUMO2). S29 is modified (phosphoserine). K43 carries the post-translational modification N6-acetyllysine. A disordered region spans residues 85 to 123; it reads PKKTRAMRRRLNKHEESLKTKKQQRKERLYPLRKYAVKA. Residues 86-96 show a composition bias toward basic residues; it reads KKTRAMRRRLN.

It belongs to the universal ribosomal protein uL29 family. In terms of assembly, component of the large ribosomal subunit.

It localises to the cytoplasm. Component of the large ribosomal subunit. The ribosome is a large ribonucleoprotein complex responsible for the synthesis of proteins in the cell. This is Large ribosomal subunit protein uL29 (RPL35) from Oryctolagus cuniculus (Rabbit).